The primary structure comprises 559 residues: NAD(P)H-quinone oxidoreductase chain 4-2 (559 aa).

The next 14 helical transmembrane spans lie at F5 to I25, W35 to N55, I86 to W106, L114 to D134, L136 to W156, F168 to F188, I207 to I227, S242 to I262, V274 to S294, V310 to G330, A331 to V351, V374 to F394, V417 to L437, and V488 to A508.

This sequence belongs to the complex I subunit 4 family.

The protein localises to the cellular thylakoid membrane. The enzyme catalyses a plastoquinone + NADH + (n+1) H(+)(in) = a plastoquinol + NAD(+) + n H(+)(out). The catalysed reaction is a plastoquinone + NADPH + (n+1) H(+)(in) = a plastoquinol + NADP(+) + n H(+)(out). NDH-1 shuttles electrons from NAD(P)H, via FMN and iron-sulfur (Fe-S) centers, to quinones in the respiratory chain. The immediate electron acceptor for the enzyme in this species is believed to be plastoquinone. Couples the redox reaction to proton translocation (for every two electrons transferred, four hydrogen ions are translocated across the cytoplasmic membrane), and thus conserves the redox energy in a proton gradient. The polypeptide is NAD(P)H-quinone oxidoreductase chain 4-2 (ndhD2) (Synechocystis sp. (strain ATCC 27184 / PCC 6803 / Kazusa)).